The chain runs to 204 residues: Endothelin-3 (204 aa).

The signal sequence occupies residues 1–17 (MELRLWFLFGLTVTSAA). A disordered region spans residues 18–71 (GPVPRPQPGDAGRSGVPRAPSATKETMAMVATRGPSPRSSGQEQEPGPFGELAA). The propeptide occupies 18 to 80 (GPVPRPQPGD…AKGGPVRYRA (63 aa)). Intrachain disulfides connect cysteine 83–cysteine 97 and cysteine 85–cysteine 93. Positions 104-204 (INTPERTVPY…KSRTDKARRL (101 aa)) are excised as a propeptide. Residues 115 to 140 (LSNHRGSVRGRRSAGPSPQSSQPSRG) form a disordered region. Low complexity predominate over residues 127–140 (SAGPSPQSSQPSRG). Residues 144–158 (CACAESQDRACVYFC) are endothelin-like. Residues 166 to 204 (GASRTPETPDKEAGKPAGRATGGLHPRRLKSRTDKARRL) form a disordered region.

Belongs to the endothelin/sarafotoxin family.

It is found in the secreted. Endothelins are endothelium-derived vasoconstrictor peptides. The sequence is that of Endothelin-3 (EDN3) from Sus scrofa (Pig).